A 21-amino-acid chain; its full sequence is 23S rRNA methylase leader peptide (21 aa).

Its function is as follows. Involved in erythromycin resistance. This is 23S rRNA methylase leader peptide from Corynebacterium diphtheriae.